The chain runs to 80 residues: Exodeoxyribonuclease 7 small subunit (80 aa).

It belongs to the XseB family. As to quaternary structure, heterooligomer composed of large and small subunits.

It is found in the cytoplasm. The enzyme catalyses Exonucleolytic cleavage in either 5'- to 3'- or 3'- to 5'-direction to yield nucleoside 5'-phosphates.. Its function is as follows. Bidirectionally degrades single-stranded DNA into large acid-insoluble oligonucleotides, which are then degraded further into small acid-soluble oligonucleotides. This chain is Exodeoxyribonuclease 7 small subunit, found in Rickettsia massiliae (strain Mtu5).